The chain runs to 191 residues: Putative glutathione-dependent formaldehyde-activating enzyme (191 aa).

Residues 20–166 enclose the CENP-V/GFA domain; sequence FSGGTLRCHC…FKSVGLETYD (147 aa). Residues cysteine 27, cysteine 29, cysteine 48, cysteine 50, cysteine 53, cysteine 95, and cysteine 98 each coordinate Zn(2+).

This sequence belongs to the Gfa family. Zn(2+) serves as cofactor.

It catalyses the reaction S-(hydroxymethyl)glutathione = glutathione + formaldehyde. The protein operates within one-carbon metabolism; formaldehyde degradation; formate from formaldehyde (glutathione route): step 1/3. In terms of biological role, catalyzes the condensation of formaldehyde and glutathione to S-hydroxymethylglutathione. The chain is Putative glutathione-dependent formaldehyde-activating enzyme from Colletotrichum graminicola (strain M1.001 / M2 / FGSC 10212) (Maize anthracnose fungus).